A 610-amino-acid polypeptide reads, in one-letter code: Myoneurin (610 aa).

Residues 24–89 (CDCTVVIGEF…IYTGTLNLDS (66 aa)) form the BTB domain. Positions 156 to 199 (SEVSTDSVQANPKPRALTKKSSQSKKKKKAFSSQKPGQSKAVQY) are disordered. The segment covering 171-185 (ALTKKSSQSKKKKKA) has biased composition (basic residues). 2 short sequence motifs (nuclear localization signal) span residues 174 to 190 (KKSS…SSQK) and 257 to 262 (KRKRRK). C2H2-type zinc fingers lie at residues 302–324 (PMCN…MRIH), 330–352 (YVCH…VRTH), 358–381 (YKCE…RMHH), 387–409 (YKCD…ARKH), 415–437 (YVCD…VRRH), 443–465 (YVCD…SRKH), 471–493 (YICG…FRSH), and 499–522 (FICE…TKVH). The interval 519–548 (TKVHSGTDKNPDCSVDDHAVSEQDSVQRSP) is disordered. Residues 523–539 (SGTDKNPDCSVDDHAVS) are compositionally biased toward basic and acidic residues.

It belongs to the krueppel C2H2-type zinc-finger protein family. Mainly expressed in the neuromuscular system. Located in and around synaptic myonuclei in adult muscle. Expression is dysregulated after nerve injury. Also found in the cerebellum, testis, heart, brain and liver.

The protein localises to the nucleus. This Mus musculus (Mouse) protein is Myoneurin (Mynn).